The primary structure comprises 79 residues: Sec-independent protein translocase protein TatA (79 aa).

Residues 1 to 21 (MGSLSIWHWIVVIAVVLLLFG) traverse the membrane as a helical segment. The segment covering 42–60 (GLQDDEKTAEKPDAVKSLD) has biased composition (basic and acidic residues). A disordered region spans residues 42–79 (GLQDDEKTAEKPDAVKSLDHNATTGTPPNRTDVGSKAV). The span at 61–70 (HNATTGTPPN) shows a compositional bias: polar residues.

The protein belongs to the TatA/E family. As to quaternary structure, the Tat system comprises two distinct complexes: a TatABC complex, containing multiple copies of TatA, TatB and TatC subunits, and a separate TatA complex, containing only TatA subunits. Substrates initially bind to the TatABC complex, which probably triggers association of the separate TatA complex to form the active translocon.

It localises to the cell inner membrane. Its function is as follows. Part of the twin-arginine translocation (Tat) system that transports large folded proteins containing a characteristic twin-arginine motif in their signal peptide across membranes. TatA could form the protein-conducting channel of the Tat system. This chain is Sec-independent protein translocase protein TatA, found in Rhodopseudomonas palustris (strain HaA2).